The sequence spans 87 residues: U24 protein (87 aa).

The residue at position 6 (T6) is a Phosphothreonine. Residues P8–Y11 carry the PPXY motif motif. A helical membrane pass occupies residues F59–V79.

Interacts with host ITCH; this interaction probably mediates ITCH degradation. Interacts probably with NEDD4.

Its subcellular location is the membrane. Its function is as follows. Down-regulates the TCR/CD3E complex and the transferrin receptor TFRC in host T-cells by blocking them from recycling back to the cell surface. This is U24 protein (U24) from Homo sapiens (Human).